A 396-amino-acid polypeptide reads, in one-letter code: Methionine import ATP-binding protein MetN 2 (396 aa).

An ABC transporter domain is found at 41–280 (VSFELVGKVF…PRHGATRALL (240 aa)). Position 77-84 (77-84 (GRSGAGKS)) interacts with ATP.

Belongs to the ABC transporter superfamily. Methionine importer (TC 3.A.1.24) family. As to quaternary structure, the complex is composed of two ATP-binding proteins (MetN), two transmembrane proteins (MetI) and a solute-binding protein (MetQ).

The protein resides in the cell inner membrane. The catalysed reaction is L-methionine(out) + ATP + H2O = L-methionine(in) + ADP + phosphate + H(+). The enzyme catalyses D-methionine(out) + ATP + H2O = D-methionine(in) + ADP + phosphate + H(+). Its function is as follows. Part of the ABC transporter complex MetNIQ involved in methionine import. Responsible for energy coupling to the transport system. The chain is Methionine import ATP-binding protein MetN 2 from Burkholderia pseudomallei (strain 1710b).